Consider the following 257-residue polypeptide: UPF0246 protein Lcho_2652 (257 aa).

Belongs to the UPF0246 family.

The polypeptide is UPF0246 protein Lcho_2652 (Leptothrix cholodnii (strain ATCC 51168 / LMG 8142 / SP-6) (Leptothrix discophora (strain SP-6))).